The chain runs to 806 residues: WEB family protein At3g02930, chloroplastic (806 aa).

A chloroplast-targeting transit peptide spans 1-78 (MASKIKNGLS…PTPPEKTQIR (78 aa)). Disordered regions lie at residues 1-94 (MASK…QIKE) and 380-403 (KSEQKLGIAEEESSKSEKEAEKLK). The segment covering 9–22 (LSDTTLRKSSSTSL) has biased composition (low complexity). Over residues 34 to 59 (PDSNSPSPTQQQSRLSFERPSSNSKP) the composition is skewed to polar residues. 3 coiled-coil regions span residues 88-530 (QSVQ…FESA), 585-662 (DCLK…IEEN), and 698-757 (ETLD…EDLN). The span at 391–403 (ESSKSEKEAEKLK) shows a compositional bias: basic and acidic residues. 2 disordered regions span residues 684–725 (ENGY…EDET) and 746–777 (KESAKEEEEDLNVVDQSQKTSPVNGLTGEDEL). 2 stretches are compositionally biased toward basic and acidic residues: residues 685–699 (NGYRSAEEKSSKVET) and 706–725 (KLEEDTEKKEKKERSPEDET). Residues 759 to 769 (VDQSQKTSPVN) are compositionally biased toward polar residues.

This sequence belongs to the WEB family.

It is found in the plastid. The protein resides in the chloroplast. This Arabidopsis thaliana (Mouse-ear cress) protein is WEB family protein At3g02930, chloroplastic.